Consider the following 338-residue polypeptide: uncharacterized protein (338 aa).

3 consecutive transmembrane segments (helical) span residues 11-31 (ILSL…TFAI), 249-269 (IAVF…IIPA), and 318-338 (VPTP…GLGL).

Its subcellular location is the cell membrane. This is an uncharacterized protein from Methanocaldococcus jannaschii (strain ATCC 43067 / DSM 2661 / JAL-1 / JCM 10045 / NBRC 100440) (Methanococcus jannaschii).